A 1049-amino-acid polypeptide reads, in one-letter code: Bifunctional cytochrome P450/NADPH--P450 reductase (1049 aa).

The segment at 2 to 472 (TIKEMPQPKT…STEQSAKKVR (471 aa)) is cytochrome P450. Tyrosine 52 provides a ligand contact to (9Z)-hexadecenoate. Cysteine 401 contacts heme. The segment at 473-1049 (KKAENAHNTP…GRYAKDVWAG (577 aa)) is NADPH--P450 reductase. In terms of domain architecture, Flavodoxin-like spans 483 to 622 (LLVLYGSNMG…TYEEWREHMW (140 aa)). FMN is bound by residues 489 to 494 (SNMGTA), 536 to 539 (SYNG), 570 to 572 (CGD), and 578 to 580 (TYQ). In terms of domain architecture, FAD-binding FR-type spans 660–892 (HGAFSTNVVA…STPQSEFTLP (233 aa)).

In the N-terminal section; belongs to the cytochrome P450 family. It depends on FAD as a cofactor. Requires FMN as cofactor. Heme serves as cofactor.

It localises to the cytoplasm. It catalyses the reaction 2 oxidized [cytochrome P450] + NADPH = 2 reduced [cytochrome P450] + NADP(+) + H(+). The catalysed reaction is an organic molecule + reduced [NADPH--hemoprotein reductase] + O2 = an alcohol + oxidized [NADPH--hemoprotein reductase] + H2O + H(+). With respect to regulation, inhibited by N-(12-imidazolyl-dodecanoyl)-L-leucine. Functionally, functions as a fatty acid monooxygenase. Catalyzes hydroxylation of fatty acids at omega-1, omega-2 and omega-3 positions. Shows activity toward medium and long-chain fatty acids, with optimum chain lengths of 12, 14 and 16 carbons (lauric, myristic, and palmitic acids). Able to metabolize some of these primary metabolites to secondary and tertiary products. Marginal activity towards short chain lengths of 8-10 carbons. Hydroxylates highly branched fatty acids, which play an essential role in membrane fluidity regulation. Also displays a NADPH-dependent reductase activity in the C-terminal domain, which allows electron transfer from NADPH to the heme iron of the cytochrome P450 N-terminal domain. Involved in inactivation of quorum sensing signals of other competing bacteria by oxidazing efficiently acyl homoserine lactones (AHLs), molecules involved in quorum sensing signaling pathways, and their lactonolysis products acyl homoserines (AHs). The polypeptide is Bifunctional cytochrome P450/NADPH--P450 reductase (Priestia megaterium (strain ATCC 14581 / DSM 32 / CCUG 1817 / JCM 2506 / NBRC 15308 / NCIMB 9376 / NCTC 10342 / NRRL B-14308 / VKM B-512 / Ford 19) (Bacillus megaterium)).